We begin with the raw amino-acid sequence, 115 residues long: MEVAAKLKYARISAQKARLVADQVRGLGAEQAVNLLRFSNKKAAALMKKVLDSAIANAEHNEGADIDELKVSTVMVDEGPSARRFHARARGRANQILKRTCHITVKVSDSQVEND.

Belongs to the universal ribosomal protein uL22 family. In terms of assembly, part of the 50S ribosomal subunit.

Its function is as follows. This protein binds specifically to 23S rRNA; its binding is stimulated by other ribosomal proteins, e.g. L4, L17, and L20. It is important during the early stages of 50S assembly. It makes multiple contacts with different domains of the 23S rRNA in the assembled 50S subunit and ribosome. Functionally, the globular domain of the protein is located near the polypeptide exit tunnel on the outside of the subunit, while an extended beta-hairpin is found that lines the wall of the exit tunnel in the center of the 70S ribosome. The polypeptide is Large ribosomal subunit protein uL22 (Coxiella burnetii (strain CbuG_Q212) (Coxiella burnetii (strain Q212))).